We begin with the raw amino-acid sequence, 431 residues long: Adenylosuccinate synthetase (431 aa).

Residues 13-19 (GDEGKGK) and 41-43 (GHT) contribute to the GTP site. Aspartate 14 acts as the Proton acceptor in catalysis. Residues aspartate 14 and glycine 41 each coordinate Mg(2+). Residues 14–17 (DEGK), 39–42 (NAGH), threonine 130, arginine 144, glutamine 225, threonine 240, and arginine 304 contribute to the IMP site. The active-site Proton donor is the histidine 42. 300 to 306 (ATTGRKR) is a binding site for substrate. GTP is bound by residues arginine 306, 332-334 (KLD), and 415-417 (STG).

It belongs to the adenylosuccinate synthetase family. Homodimer. Requires Mg(2+) as cofactor.

It localises to the cytoplasm. It carries out the reaction IMP + L-aspartate + GTP = N(6)-(1,2-dicarboxyethyl)-AMP + GDP + phosphate + 2 H(+). It functions in the pathway purine metabolism; AMP biosynthesis via de novo pathway; AMP from IMP: step 1/2. In terms of biological role, plays an important role in the de novo pathway of purine nucleotide biosynthesis. Catalyzes the first committed step in the biosynthesis of AMP from IMP. This chain is Adenylosuccinate synthetase, found in Shewanella halifaxensis (strain HAW-EB4).